Consider the following 302-residue polypeptide: Putative thiol protease R355 (302 aa).

Active-site residues include histidine 182 and aspartate 199. The active-site Nucleophile is cysteine 244.

Belongs to the peptidase C48 family.

Its subcellular location is the virion. The polypeptide is Putative thiol protease R355 (Acanthamoeba polyphaga mimivirus (APMV)).